Here is a 599-residue protein sequence, read N- to C-terminus: Elongation factor 4 (599 aa).

Residues Ser5 to Thr187 form the tr-type G domain. GTP contacts are provided by residues Asp17–Thr22 and Asn134–Asp137.

This sequence belongs to the TRAFAC class translation factor GTPase superfamily. Classic translation factor GTPase family. LepA subfamily.

Its subcellular location is the cell inner membrane. The enzyme catalyses GTP + H2O = GDP + phosphate + H(+). Functionally, required for accurate and efficient protein synthesis under certain stress conditions. May act as a fidelity factor of the translation reaction, by catalyzing a one-codon backward translocation of tRNAs on improperly translocated ribosomes. Back-translocation proceeds from a post-translocation (POST) complex to a pre-translocation (PRE) complex, thus giving elongation factor G a second chance to translocate the tRNAs correctly. Binds to ribosomes in a GTP-dependent manner. The chain is Elongation factor 4 from Cellvibrio japonicus (strain Ueda107) (Pseudomonas fluorescens subsp. cellulosa).